The following is a 98-amino-acid chain: U10-barytoxin-Tl1a (98 aa).

An N-terminal signal peptide occupies residues methionine 1–alanine 21. A propeptide spanning residues serine 22 to arginine 50 is cleaved from the precursor. 3 disulfides stabilise this stretch: cysteine 57-cysteine 71, cysteine 64-cysteine 76, and cysteine 70-cysteine 89.

It belongs to the neurotoxin 10 (Hwtx-1) family. 27 (ICK-3) subfamily. In terms of tissue distribution, expressed by the venom gland.

The protein resides in the secreted. In terms of biological role, ion channel inhibitor. In Trittame loki (Brush-footed trapdoor spider), this protein is U10-barytoxin-Tl1a.